The chain runs to 414 residues: Cyclic di-GMP phosphodiesterase PA4108 (414 aa).

One can recognise an HD-GYP domain in the interval 133-330; it reads ISASVLRHPN…YPVGALVRLE (198 aa). Positions 160, 192, 193, 221, 246, and 247 each coordinate a divalent metal cation.

As to quaternary structure, monomer.

It carries out the reaction 3',3'-c-di-GMP + 2 H2O = 2 GMP + 2 H(+). With respect to regulation, activated by Mg(2+) and Mn(2+). Functionally, phosphodiesterase (PDE) that catalyzes the hydrolysis of cyclic diguanylate (c-di-GMP) to GMP. Hydrolyzes c-di-GMP to GMP in a two-step reaction, via the linear intermediate 5'-phosphoguanylyl(3'-&gt;5')guanosine (pGpG). In vitro, can use pGpG as an alternative substrate and hydrolyze it into GMP. Acts in regulation of motility, synthesis of virulence determinants and biofilm architecture. This Pseudomonas aeruginosa (strain ATCC 15692 / DSM 22644 / CIP 104116 / JCM 14847 / LMG 12228 / 1C / PRS 101 / PAO1) protein is Cyclic di-GMP phosphodiesterase PA4108.